Reading from the N-terminus, the 90-residue chain is Small ribosomal subunit protein bS18B (90 aa).

This sequence belongs to the bacterial ribosomal protein bS18 family. Part of the 30S ribosomal subunit. Forms a tight heterodimer with protein bS6.

Its function is as follows. Binds as a heterodimer with protein bS6 to the central domain of the 16S rRNA, where it helps stabilize the platform of the 30S subunit. The protein is Small ribosomal subunit protein bS18B of Roseiflexus sp. (strain RS-1).